A 242-amino-acid chain; its full sequence is 1-(5-phosphoribosyl)-5-[(5-phosphoribosylamino)methylideneamino] imidazole-4-carboxamide isomerase (242 aa).

Asp8 acts as the Proton acceptor in catalysis. Residue Asp129 is the Proton donor of the active site.

It belongs to the HisA/HisF family.

It is found in the cytoplasm. It carries out the reaction 1-(5-phospho-beta-D-ribosyl)-5-[(5-phospho-beta-D-ribosylamino)methylideneamino]imidazole-4-carboxamide = 5-[(5-phospho-1-deoxy-D-ribulos-1-ylimino)methylamino]-1-(5-phospho-beta-D-ribosyl)imidazole-4-carboxamide. It functions in the pathway amino-acid biosynthesis; L-histidine biosynthesis; L-histidine from 5-phospho-alpha-D-ribose 1-diphosphate: step 4/9. This chain is 1-(5-phosphoribosyl)-5-[(5-phosphoribosylamino)methylideneamino] imidazole-4-carboxamide isomerase, found in Dictyoglomus turgidum (strain DSM 6724 / Z-1310).